A 570-amino-acid polypeptide reads, in one-letter code: MSQDAAIAEQTPVEHLSAVDSASHSVLSTPSNKAERDEIKAYGEGEEHEPVVEIPKRPASAYVTVSIMCIMIAFGGFVFGWDTGTISGFINQTDFIRRFGMKHKDGTNYLSKVRTGLIVSIFNIGCAIGGIILSKLGDMYGRKVGLIVVVVIYIIGIIIQIASINKWYQYFIGRIISGLGVGGIAVLSPMLISEVSPKHLRGTLVSCYQLMITAGIFLGYCTNFGTKNYSNSVQWRVPLGLCFAWALFMIGGMTFVPESPRYLAEVGKIEEAKRSIAVSNKVAVDDPSVLAEVEAVLAGVEAEKLAGNASWGELFSSKTKVLQRLIMGAMIQSLQQLTGDNYFFYYGTTIFKAVGLSDSFETSIVLGIVNFASTFVGIYVVERYGRRTCLLWGAASMTACMVVYASVGVTRLWPNGQDQPSSKGAGNCMIVFACFYIFCFATTWAPIPYVVVSETFPLRVKSKAMSIATAANWLWGFLIGFFTPFITGAINFYYGYVFMGCLVFMFFYVLLVVPETKGLTLEEVNTMWEEGVLPWKSASWVPPSRRGANYDAEEMAHDDKPLYKRMFSTK.

Topologically, residues 1 to 60 are cytoplasmic; it reads MSQDAAIAEQTPVEHLSAVDSASHSVLSTPSNKAERDEIKAYGEGEEHEPVVEIPKRPAS. The chain crosses the membrane as a helical span at residues 61 to 81; that stretch reads AYVTVSIMCIMIAFGGFVFGW. Topologically, residues 82–116 are extracellular; it reads DTGTISGFINQTDFIRRFGMKHKDGTNYLSKVRTG. N-linked (GlcNAc...) asparagine glycosylation is present at asparagine 91. The chain crosses the membrane as a helical span at residues 117-137; sequence LIVSIFNIGCAIGGIILSKLG. At 138 to 143 the chain is on the cytoplasmic side; that stretch reads DMYGRK. Residues 144 to 164 form a helical membrane-spanning segment; that stretch reads VGLIVVVVIYIIGIIIQIASI. At 165–174 the chain is on the extracellular side; sequence NKWYQYFIGR. The helical transmembrane segment at 175-195 threads the bilayer; the sequence is IISGLGVGGIAVLSPMLISEV. At 196–201 the chain is on the cytoplasmic side; sequence SPKHLR. The chain crosses the membrane as a helical span at residues 202–222; the sequence is GTLVSCYQLMITAGIFLGYCT. Residues 223–236 are Extracellular-facing; the sequence is NFGTKNYSNSVQWR. Asparagine 228 carries N-linked (GlcNAc...) asparagine glycosylation. Residues 237–257 form a helical membrane-spanning segment; sequence VPLGLCFAWALFMIGGMTFVP. Residues 258 to 340 are Cytoplasmic-facing; the sequence is ESPRYLAEVG…IQSLQQLTGD (83 aa). A helical transmembrane segment spans residues 341–357; that stretch reads NYFFYYGTTIFKAVGLS. Residues 358–363 are Extracellular-facing; it reads DSFETS. The helical transmembrane segment at 364 to 381 threads the bilayer; the sequence is IVLGIVNFASTFVGIYVV. Residues 382-388 are Cytoplasmic-facing; sequence ERYGRRT. A helical membrane pass occupies residues 389-409; the sequence is CLLWGAASMTACMVVYASVGV. At 410–431 the chain is on the extracellular side; sequence TRLWPNGQDQPSSKGAGNCMIV. The helical transmembrane segment at 432–452 threads the bilayer; it reads FACFYIFCFATTWAPIPYVVV. At 453 to 469 the chain is on the cytoplasmic side; the sequence is SETFPLRVKSKAMSIAT. Residues 470–490 form a helical membrane-spanning segment; sequence AANWLWGFLIGFFTPFITGAI. Position 491 (asparagine 491) is a topological domain, extracellular. The helical transmembrane segment at 492-512 threads the bilayer; it reads FYYGYVFMGCLVFMFFYVLLV. The Cytoplasmic segment spans residues 513–570; the sequence is VPETKGLTLEEVNTMWEEGVLPWKSASWVPPSRRGANYDAEEMAHDDKPLYKRMFSTK. A Glycyl lysine isopeptide (Lys-Gly) (interchain with G-Cter in ubiquitin) cross-link involves residue lysine 560.

Belongs to the major facilitator superfamily. Sugar transporter (TC 2.A.1.1) family.

It localises to the membrane. In terms of biological role, high-affinity glucose transporter. The sequence is that of High-affinity hexose transporter HXT6 (HXT6) from Saccharomyces cerevisiae (strain ATCC 204508 / S288c) (Baker's yeast).